The chain runs to 250 residues: Replicating protein (250 aa).

2 disordered regions span residues 1-23 (MFQQIGAVQAKSGTDEPAHPCEK) and 168-250 (KAHM…KAFE). Composition is skewed to basic and acidic residues over residues 13 to 23 (GTDEPAHPCEK) and 178 to 190 (DRLRETVEDRTRA). Residues 218–237 (SRCSFTTPNRPRRTLPSSHP) show a composition bias toward polar residues.

Its function is as follows. Required for replication. It likely regulates pTAR copy number. The sequence is that of Replicating protein (repA) from Rhizobium radiobacter (Agrobacterium tumefaciens).